A 967-amino-acid chain; its full sequence is RNA polymerase-associated protein RapA (967 aa).

Residues 163–333 (EVGQRHAPRV…FARLRLLDPN (171 aa)) enclose the Helicase ATP-binding domain. 176–183 (DEVGLGKT) is an ATP binding site. Positions 279–282 (DEAH) match the DEAH box motif. In terms of domain architecture, Helicase C-terminal spans 489–643 (RVEWLLNYLT…TCPTGRTIYD (155 aa)).

Belongs to the SNF2/RAD54 helicase family. RapA subfamily. Interacts with the RNAP. Has a higher affinity for the core RNAP than for the holoenzyme. Its ATPase activity is stimulated by binding to RNAP.

Its function is as follows. Transcription regulator that activates transcription by stimulating RNA polymerase (RNAP) recycling in case of stress conditions such as supercoiled DNA or high salt concentrations. Probably acts by releasing the RNAP, when it is trapped or immobilized on tightly supercoiled DNA. Does not activate transcription on linear DNA. Probably not involved in DNA repair. The polypeptide is RNA polymerase-associated protein RapA (Pectobacterium carotovorum subsp. carotovorum (strain PC1)).